The sequence spans 191 residues: Elongation factor P-like protein (191 aa).

Belongs to the elongation factor P family.

The polypeptide is Elongation factor P-like protein (Photobacterium profundum (strain SS9)).